A 366-amino-acid polypeptide reads, in one-letter code: Alanine racemase (366 aa).

The active-site Proton acceptor; specific for D-alanine is K33. Residue K33 is modified to N6-(pyridoxal phosphate)lysine. Substrate is bound at residue R129. Y253 acts as the Proton acceptor; specific for L-alanine in catalysis. Residue M301 coordinates substrate.

The protein belongs to the alanine racemase family. Pyridoxal 5'-phosphate is required as a cofactor.

It carries out the reaction L-alanine = D-alanine. It participates in amino-acid biosynthesis; D-alanine biosynthesis; D-alanine from L-alanine: step 1/1. Its function is as follows. Catalyzes the interconversion of L-alanine and D-alanine. May also act on other amino acids. This chain is Alanine racemase (alr), found in Xanthomonas oryzae pv. oryzae (strain MAFF 311018).